Reading from the N-terminus, the 550-residue chain is Zinc finger protein 382 (550 aa).

Residues 1–105 form a mediates interaction with TRIM28 region; that stretch reads MPLQGSVSFK…RHSRPLIFIN (105 aa). 2 represses transcription regions span residues 5–46 and 70–211; these read GSVS…FVSV and IFPS…PEQP. The region spanning 7 to 78 is the KRAB domain; that stretch reads VSFKDVTVDF…RIFPSYSYLE (72 aa). The C2H2-type 1; degenerate zinc finger occupies 212-234; that stretch reads FDHNECEKSFLMKGMLFTHTRAH. 9 C2H2-type zinc fingers span residues 296 to 318, 324 to 346, 352 to 374, 380 to 402, 408 to 430, 436 to 458, 464 to 486, 492 to 514, and 520 to 542; these read FHCP…QRIH, YVCN…EKTH, FICI…HKTH, YECP…QRTH, YQCN…QRTH, YICN…QRIH, YICN…HRIH, NGCP…QKTH, and YECK…QKTH. The interval 296-550 is required for transcriptional repression activity; probably mediates sequence-specific DNA-binding; the sequence is FHCPYCGNNF…THKVETTGIQ (255 aa).

This sequence belongs to the krueppel C2H2-type zinc-finger protein family. In terms of assembly, interacts with TRIM28; enhances the transcriptional repressor activity. In terms of tissue distribution, specifically expressed in heart with a weaker expression also detected in skeletal muscle.

The protein localises to the nucleus. Functionally, functions as a sequence-specific transcriptional repressor. The polypeptide is Zinc finger protein 382 (ZNF382) (Homo sapiens (Human)).